The following is a 127-amino-acid chain: MPYKKDYKRLAYNTLGYLGEVLIILFLKCKLYHIIKHRYRCPLGEIDIIAHKNKQLVFIEVKTSLFNKNIPITYKQQKSILKSAKYFIAFHRKFANYSIRFDLYFFSLSTGLTHIPNAWQEPQVVYK.

The protein belongs to the UPF0102 family.

The polypeptide is UPF0102 protein ERGA_CDS_00540 (Ehrlichia ruminantium (strain Gardel)).